We begin with the raw amino-acid sequence, 245 residues long: Type II restriction enzyme EcoRV (245 aa).

The Mg(2+) site is built by Glu-45, Asp-74, and Asp-90. Residues Asp-74, Asp-90, and Lys-92 contribute to the active site.

Homodimer. The cofactor is Mg(2+).

It catalyses the reaction Endonucleolytic cleavage of DNA to give specific double-stranded fragments with terminal 5'-phosphates.. Its function is as follows. A P subtype restriction enzyme that recognizes the double-stranded sequence 5'-GATATC-3' and cleaves after T-3. In Escherichia coli, this protein is Type II restriction enzyme EcoRV (ecoRVR).